The following is a 493-amino-acid chain: Anthranilate synthase component 1 (493 aa).

Residues S48 and 273–275 each bind L-tryptophan; that span reads PYM. 308 to 309 is a binding site for chorismate; it reads GT. Residue E335 participates in Mg(2+) binding. Chorismate is bound by residues Y423, R443, 457 to 459, and G459; that span reads GGG. E472 provides a ligand contact to Mg(2+).

Belongs to the anthranilate synthase component I family. Heterotetramer consisting of two non-identical subunits: a beta subunit (TrpG) and a large alpha subunit (TrpE). Mg(2+) is required as a cofactor.

The enzyme catalyses chorismate + L-glutamine = anthranilate + pyruvate + L-glutamate + H(+). It participates in amino-acid biosynthesis; L-tryptophan biosynthesis; L-tryptophan from chorismate: step 1/5. With respect to regulation, feedback inhibited by tryptophan. Functionally, part of a heterotetrameric complex that catalyzes the two-step biosynthesis of anthranilate, an intermediate in the biosynthesis of L-tryptophan. In the first step, the glutamine-binding beta subunit (TrpG) of anthranilate synthase (AS) provides the glutamine amidotransferase activity which generates ammonia as a substrate that, along with chorismate, is used in the second step, catalyzed by the large alpha subunit of AS (TrpE) to produce anthranilate. In the absence of TrpG, TrpE can synthesize anthranilate directly from chorismate and high concentrations of ammonia. This Pseudomonas putida (Arthrobacter siderocapsulatus) protein is Anthranilate synthase component 1 (trpE).